The sequence spans 498 residues: XK-related protein 4 (498 aa).

The disordered stretch occupies residues 24–46 (SEHSGSVQGLHPGAQPDSAGAGD). Transmembrane regions (helical) follow at residues 81 to 101 (CLWI…DVWL) and 111 to 131 (YWWF…VQLF). Residues 166 to 203 (SHGDVTAQHHPATPQRQASTASRNTTTNSTASTGLGPR) form a disordered region. Positions 183-198 (ASTASRNTTTNSTAST) are enriched in low complexity. 2 helical membrane passes run 302–322 (LFIY…LWYL) and 332–352 (FAVP…VFML).

The protein belongs to the XK family.

Its subcellular location is the cell membrane. It catalyses the reaction a 1,2-diacyl-sn-glycero-3-phospho-L-serine(in) = a 1,2-diacyl-sn-glycero-3-phospho-L-serine(out). In terms of biological role, phospholipid scramblase that promotes phosphatidylserine exposure on apoptotic cell surface. Phosphatidylserine is a specific marker only present at the surface of apoptotic cells and acts as a specific signal for engulfment. This is XK-related protein 4 from Tetraodon nigroviridis (Spotted green pufferfish).